The sequence spans 222 residues: dTTP/UTP pyrophosphatase (222 aa).

Residue D83 is the Proton acceptor of the active site.

The protein belongs to the Maf family. YhdE subfamily. A divalent metal cation is required as a cofactor.

The protein resides in the cytoplasm. It carries out the reaction dTTP + H2O = dTMP + diphosphate + H(+). The catalysed reaction is UTP + H2O = UMP + diphosphate + H(+). Functionally, nucleoside triphosphate pyrophosphatase that hydrolyzes dTTP and UTP. May have a dual role in cell division arrest and in preventing the incorporation of modified nucleotides into cellular nucleic acids. This chain is dTTP/UTP pyrophosphatase, found in Desulfitobacterium hafniense (strain Y51).